The chain runs to 368 residues: Flagellar P-ring protein (368 aa).

The N-terminal stretch at 1–24 is a signal peptide; that stretch reads MTLTRPLALISALAALILALPADA.

This sequence belongs to the FlgI family. In terms of assembly, the basal body constitutes a major portion of the flagellar organelle and consists of four rings (L,P,S, and M) mounted on a central rod.

It is found in the periplasm. The protein localises to the bacterial flagellum basal body. Functionally, assembles around the rod to form the L-ring and probably protects the motor/basal body from shearing forces during rotation. This chain is Flagellar P-ring protein, found in Methylobacillus flagellatus (strain ATCC 51484 / DSM 6875 / VKM B-1610 / KT).